We begin with the raw amino-acid sequence, 1210 residues long: Ice nucleation protein (1210 aa).

The octapeptide periodicity stretch occupies residues 165 to 1156 (AVYGSTLTGA…LSGGENSTLI (992 aa)).

It belongs to the bacterial ice nucleation protein family.

The protein localises to the cell outer membrane. In terms of biological role, ice nucleation proteins enable bacteria to nucleate crystallization in supercooled water. This is Ice nucleation protein (inaW) from Pseudomonas fluorescens.